The chain runs to 131 residues: Profilin-6 (131 aa).

A disulfide bridge links C13 with C115. The short motif at 81 to 97 (AVIRGKKGAGGITIKKT) is the Involved in PIP2 interaction element. T111 is subject to Phosphothreonine.

Belongs to the profilin family. Occurs in many kinds of cells as a complex with monomeric actin in a 1:1 ratio. Phosphorylated by MAP kinases.

It localises to the cytoplasm. It is found in the cytoskeleton. Its function is as follows. Binds to actin and affects the structure of the cytoskeleton. At high concentrations, profilin prevents the polymerization of actin, whereas it enhances it at low concentrations. This chain is Profilin-6, found in Phleum pratense (Common timothy).